Reading from the N-terminus, the 87-residue chain is Small ribosomal subunit protein uS17 (87 aa).

The protein belongs to the universal ribosomal protein uS17 family. In terms of assembly, part of the 30S ribosomal subunit.

Its function is as follows. One of the primary rRNA binding proteins, it binds specifically to the 5'-end of 16S ribosomal RNA. In Aster yellows witches'-broom phytoplasma (strain AYWB), this protein is Small ribosomal subunit protein uS17.